The sequence spans 519 residues: MNALLIAGTTSDAGKSVVAAGVCRWLARTGARVAPFKAQNMSNNSVVTPDGGEIGRAQAVQAAACGLEPSVRFNPVLLKPGSDRRSQVVVLGHVSGEVTAMSYRERKAALLDTVVSTLDGLRAEHDHVICEGAGSPAEINLRATDIANMGLARAAGLPVLVVGDIDRGGVFAQLFGTLALLDAADQALVGGFVINKFRGDPALLDSGLDRLRALTGRPVHGVLPWAEDLWLDAEDSLSYVADGVVGRPAPPRGSQWLRVAVPRLPRISNATDVEALAAEPGVAVRFVTEPSRLTDADLVVLPGSKSTVADLGWLHDTGLADAIRAHAGAGLPVVGICGGFQMLTRRITDQVESGVGAVDGLGMLDLEIEFEEAKTLRRPSGTAFGEPVDGYEIHHGVPVRRGDDLAGLVRLPGGTAEGGLSGSVAGTHWHGLFENDAFRRRFLTWAAGCAGRDGFVAAGDTSFAEVRAGQLDLLGDLVEKHLDTDAIRRLLEGGAPAGLPLLPPGAGGRAALRSGGGSE.

Positions 256–438 constitute a GATase cobBQ-type domain; the sequence is WLRVAVPRLP…WHGLFENDAF (183 aa). The active-site Nucleophile is cysteine 337. The active site involves histidine 430.

It belongs to the CobB/CobQ family. CobQ subfamily.

It participates in cofactor biosynthesis; adenosylcobalamin biosynthesis. Functionally, catalyzes amidations at positions B, D, E, and G on adenosylcobyrinic A,C-diamide. NH(2) groups are provided by glutamine, and one molecule of ATP is hydrogenolyzed for each amidation. In Saccharopolyspora erythraea (strain ATCC 11635 / DSM 40517 / JCM 4748 / NBRC 13426 / NCIMB 8594 / NRRL 2338), this protein is Cobyric acid synthase.